The following is a 509-amino-acid chain: Probable glycine dehydrogenase (decarboxylating) subunit 2 (509 aa).

K278 carries the post-translational modification N6-(pyridoxal phosphate)lysine.

This sequence belongs to the GcvP family. C-terminal subunit subfamily. The glycine cleavage system is composed of four proteins: P, T, L and H. In this organism, the P 'protein' is a heterodimer of two subunits. Pyridoxal 5'-phosphate is required as a cofactor.

It catalyses the reaction N(6)-[(R)-lipoyl]-L-lysyl-[glycine-cleavage complex H protein] + glycine + H(+) = N(6)-[(R)-S(8)-aminomethyldihydrolipoyl]-L-lysyl-[glycine-cleavage complex H protein] + CO2. Functionally, the glycine cleavage system catalyzes the degradation of glycine. The P protein binds the alpha-amino group of glycine through its pyridoxal phosphate cofactor; CO(2) is released and the remaining methylamine moiety is then transferred to the lipoamide cofactor of the H protein. In Saccharolobus islandicus (strain Y.N.15.51 / Yellowstone #2) (Sulfolobus islandicus), this protein is Probable glycine dehydrogenase (decarboxylating) subunit 2.